The sequence spans 701 residues: Elongation factor G (701 aa).

Positions 8–286 constitute a tr-type G domain; the sequence is DRVRNIGIIA…AVVLLLPSPL (279 aa). GTP is bound by residues 17 to 24, 85 to 89, and 139 to 142; these read AHIDAGKT, DTPGH, and NKMD.

The protein belongs to the TRAFAC class translation factor GTPase superfamily. Classic translation factor GTPase family. EF-G/EF-2 subfamily.

It localises to the cytoplasm. In terms of biological role, catalyzes the GTP-dependent ribosomal translocation step during translation elongation. During this step, the ribosome changes from the pre-translocational (PRE) to the post-translocational (POST) state as the newly formed A-site-bound peptidyl-tRNA and P-site-bound deacylated tRNA move to the P and E sites, respectively. Catalyzes the coordinated movement of the two tRNA molecules, the mRNA and conformational changes in the ribosome. This chain is Elongation factor G, found in Herpetosiphon aurantiacus (strain ATCC 23779 / DSM 785 / 114-95).